The sequence spans 975 residues: Chromosome transmission fidelity protein 18 homolog (975 aa).

Disordered stretches follow at residues 30-83 (EGAS…KRQV) and 114-141 (SEEM…DLAE). The residue at position 51 (threonine 51) is a Phosphothreonine. A compositionally biased stretch (low complexity) spans 58-77 (RGDAASSPAPAASVGSSQGG). At serine 64 the chain carries Phosphoserine. Residues 122–136 (PPDSSPTDITPPPSP) show a composition bias toward pro residues. A Phosphoserine modification is found at serine 225. Disordered regions lie at residues 246-276 (SDTL…GQDA) and 320-346 (RPSR…KWKS). 374–381 (GPPGLGKT) lines the ATP pocket. The interval 858 to 896 (ASARVENSPQVDGSPPGLEGLLGGIGEKGVHRPAPRNHE) is disordered. Residue serine 871 is modified to Phosphoserine.

Belongs to the activator 1 small subunits family. CTF18 subfamily. In terms of assembly, component of the CTF18-RFC complex, which consists of CTF18, CTF8, DCC1, RFC2, RFC3, RFC4 and RFC5. During assembly of the CTF18-RFC complex, CTF18 may first assemble into a subcomplex with RFC2, RFC3, RFC4 and RFC5. CTF18 then interacts directly with CTF8, which in turn interacts with DCC1. The CTF18-RFC complex associates with PCNA and with DNA polymerase POLH. The CTF18-RFC complex does not interact with the Rad9/Rad1/Hus1 complex. CTF18 interacts with SMC1A and RAD21. Interacts with DDX11.

Its subcellular location is the nucleus. Chromosome cohesion factor involved in sister chromatid cohesion and fidelity of chromosome transmission. Component of one of the cell nuclear antigen loader complexes, CTF18-replication factor C (CTF18-RFC), which consists of CTF18, CTF8, DCC1, RFC2, RFC3, RFC4 and RFC5. The CTF18-RFC complex binds to single-stranded and primed DNAs and has weak ATPase activity that is stimulated by the presence of primed DNA, replication protein A (RPA) and by proliferating cell nuclear antigen (PCNA). The CTF18-RFC complex catalyzes the ATP-dependent loading of PCNA onto primed and gapped DNA. Interacts with and stimulates DNA polymerase POLH. During DNA repair synthesis, involved in loading DNA polymerase POLE at the sites of local damage. The sequence is that of Chromosome transmission fidelity protein 18 homolog (CHTF18) from Homo sapiens (Human).